A 302-amino-acid polypeptide reads, in one-letter code: (2S)-3-sulfopropanediol sulfolyase activating enzyme (302 aa).

Positions histidine 19–glutamate 301 constitute a Radical SAM core domain. Cysteine 33, cysteine 37, cysteine 40, cysteine 59, cysteine 65, cysteine 68, cysteine 72, cysteine 91, cysteine 94, cysteine 97, and cysteine 101 together coordinate [4Fe-4S] cluster. Position 39–41 (tryptophan 39–serine 41) interacts with S-adenosyl-L-methionine. 4Fe-4S ferredoxin-type domains follow at residues proline 50 to glycine 81 and glycine 82 to glutamate 111. Residues glycine 141 and aspartate 190–lysine 192 contribute to the S-adenosyl-L-methionine site.

It belongs to the organic radical-activating enzymes family. [4Fe-4S] cluster is required as a cofactor.

The enzyme catalyses glycyl-[protein] + reduced [flavodoxin] + S-adenosyl-L-methionine = glycin-2-yl radical-[protein] + semiquinone [flavodoxin] + 5'-deoxyadenosine + L-methionine + H(+). Its pathway is organosulfur degradation; alkanesulfonate degradation. Functionally, involved in the degradation of the organosulfur compound 2(S)-dihydroxypropanesulfonate (DHPS). Catalyzes activation of the (2S)-3-sulfopropanediol sulfolyase HpsG under anaerobic conditions by generation of an organic free radical on a glycine residue. This is (2S)-3-sulfopropanediol sulfolyase activating enzyme from Bilophila wadsworthia (strain 3_1_6).